A 488-amino-acid chain; its full sequence is Elongation factor Tu, chloroplastic (488 aa).

Residues 1-20 form a disordered region; the sequence is MALSSTAATTSSKLKLSNPP. Residues 1 to 79 constitute a chloroplast transit peptide; the sequence is MALSSTAATT…RPSSSPFTVR (79 aa). In terms of domain architecture, tr-type G spans 89–293; it reads KPHLNIGTIG…EVDKYIPIPQ (205 aa). The tract at residues 98–105 is G1; sequence GHVDHGKT. 98-105 contacts GTP; the sequence is GHVDHGKT. The interval 139 to 143 is G2; sequence GITIN. A G3 region spans residues 160-163; that stretch reads DCPG. Residues 160–164 and 215–218 each bind GTP; these read DCPGH and NKQD. Positions 215–218 are G4; the sequence is NKQD. The interval 253-255 is G5; that stretch reads SAL.

The protein belongs to the TRAFAC class translation factor GTPase superfamily. Classic translation factor GTPase family. EF-Tu/EF-1A subfamily. In terms of tissue distribution, higher expression in leaves than in roots.

The protein localises to the plastid. Its subcellular location is the chloroplast. This protein promotes the GTP-dependent binding of aminoacyl-tRNA to the A-site of ribosomes during protein biosynthesis. In Pisum sativum (Garden pea), this protein is Elongation factor Tu, chloroplastic (tufA).